A 320-amino-acid polypeptide reads, in one-letter code: Transcription factor MYB80 (320 aa).

HTH myb-type domains follow at residues 9–65 (KENV…RPDL) and 66–116 (KHGQ…KKKL). 2 consecutive DNA-binding regions (H-T-H motif) follow at residues 37–61 (WRLI…TNYL) and 89–112 (WSLI…NTKL). The interval 257–283 (TAAAEEEERRKLKGEVVDQEEIGSEGG) is disordered. Residues 263–272 (EERRKLKGEV) are compositionally biased toward basic and acidic residues.

In terms of tissue distribution, expressed in the tapetum and middle layer of developing anthers. Expressed in trichomes.

Its subcellular location is the nucleus. In terms of biological role, transcription factor that binds to the DNA sequence 5'-CCAACC-3'. Regulates directly PME5, UND and GLOX1. Essential for tapetum development in anthers and microsporogenesis. Regulates the timing of tapetal programmed cell death (PCD) which is critical for pollen development. May act through the activation of UND, encoding an A1 aspartic protease. Required for anther development by regulating tapetum development, callose dissolution and exine formation. Acts upstream of A6 and FAR2/MS2, two genes required for pollen exine formation. Negatively regulates trichome endoreduplication and trichome branching. This Arabidopsis thaliana (Mouse-ear cress) protein is Transcription factor MYB80.